The following is a 154-amino-acid chain: NAD(P)H-quinone oxidoreductase subunit N (154 aa).

It belongs to the complex I NdhN subunit family. NDH-1 can be composed of about 15 different subunits; different subcomplexes with different compositions have been identified which probably have different functions.

It is found in the cellular thylakoid membrane. It catalyses the reaction a plastoquinone + NADH + (n+1) H(+)(in) = a plastoquinol + NAD(+) + n H(+)(out). It carries out the reaction a plastoquinone + NADPH + (n+1) H(+)(in) = a plastoquinol + NADP(+) + n H(+)(out). In terms of biological role, NDH-1 shuttles electrons from an unknown electron donor, via FMN and iron-sulfur (Fe-S) centers, to quinones in the respiratory and/or the photosynthetic chain. The immediate electron acceptor for the enzyme in this species is believed to be plastoquinone. Couples the redox reaction to proton translocation, and thus conserves the redox energy in a proton gradient. Cyanobacterial NDH-1 also plays a role in inorganic carbon-concentration. In Prochlorococcus marinus (strain NATL2A), this protein is NAD(P)H-quinone oxidoreductase subunit N.